The sequence spans 643 residues: Transmembrane protein 62 (643 aa).

The chain crosses the membrane as a helical span at residues 9–29 (VVAGLAAAAVAALLLEHYGLA). N180 is a glycosylation site (N-linked (GlcNAc...) asparagine). 4 helical membrane-spanning segments follow: residues 431–451 (IVARVLFVLIVLIQLTTLITF), 484–504 (YSVLLLTLYTVLGPWFVGEII), 532–552 (GIIQLVFFNIPLMAYVCWSLL), and 572–592 (IIPVYLLILLLYIWQVYSCYF).

Its subcellular location is the membrane. The protein is Transmembrane protein 62 (Tmem62) of Mus musculus (Mouse).